A 154-amino-acid polypeptide reads, in one-letter code: 6,7-dimethyl-8-ribityllumazine synthase (154 aa).

5-amino-6-(D-ribitylamino)uracil-binding positions include tryptophan 22, 56–58, and 80–82; these read AWE and CVI. A (2S)-2-hydroxy-3-oxobutyl phosphate-binding site is contributed by 85–86; sequence DT. Histidine 88 (proton donor) is an active-site residue. Position 113 (asparagine 113) interacts with 5-amino-6-(D-ribitylamino)uracil. Arginine 127 contacts (2S)-2-hydroxy-3-oxobutyl phosphate.

The protein belongs to the DMRL synthase family. As to quaternary structure, forms an icosahedral capsid composed of 60 subunits, arranged as a dodecamer of pentamers.

The catalysed reaction is (2S)-2-hydroxy-3-oxobutyl phosphate + 5-amino-6-(D-ribitylamino)uracil = 6,7-dimethyl-8-(1-D-ribityl)lumazine + phosphate + 2 H2O + H(+). It functions in the pathway cofactor biosynthesis; riboflavin biosynthesis; riboflavin from 2-hydroxy-3-oxobutyl phosphate and 5-amino-6-(D-ribitylamino)uracil: step 1/2. In terms of biological role, catalyzes the formation of 6,7-dimethyl-8-ribityllumazine by condensation of 5-amino-6-(D-ribitylamino)uracil with 3,4-dihydroxy-2-butanone 4-phosphate. This is the penultimate step in the biosynthesis of riboflavin. This is 6,7-dimethyl-8-ribityllumazine synthase from Xanthomonas oryzae pv. oryzae (strain MAFF 311018).